Here is a 446-residue protein sequence, read N- to C-terminus: Bifunctional protein GlmU (446 aa).

The pyrophosphorylase stretch occupies residues 1–229; the sequence is MTEKPVALIV…EAETLGINTR (229 aa). Residues 11-14, lysine 25, glutamine 78, 83-84, 106-108, glycine 141, glutamate 155, asparagine 170, and asparagine 227 each bind UDP-N-acetyl-alpha-D-glucosamine; these read LAAG, GT, and YGD. Aspartate 108 is a binding site for Mg(2+). A Mg(2+)-binding site is contributed by asparagine 227. A linker region spans residues 230–250; the sequence is AELAAAEAAFQVRARARALED. Residues 251 to 446 form an N-acetyltransferase region; sequence GVTMTDPATV…MQALRQKKGN (196 aa). Positions 316 and 334 each coordinate UDP-N-acetyl-alpha-D-glucosamine. Histidine 346 acts as the Proton acceptor in catalysis. Residues tyrosine 349 and asparagine 360 each coordinate UDP-N-acetyl-alpha-D-glucosamine. Residues alanine 363, 369–370, serine 388, serine 406, and arginine 423 each bind acetyl-CoA; that span reads NY.

In the N-terminal section; belongs to the N-acetylglucosamine-1-phosphate uridyltransferase family. This sequence in the C-terminal section; belongs to the transferase hexapeptide repeat family. Homotrimer. Requires Mg(2+) as cofactor.

The protein localises to the cytoplasm. The catalysed reaction is alpha-D-glucosamine 1-phosphate + acetyl-CoA = N-acetyl-alpha-D-glucosamine 1-phosphate + CoA + H(+). It catalyses the reaction N-acetyl-alpha-D-glucosamine 1-phosphate + UTP + H(+) = UDP-N-acetyl-alpha-D-glucosamine + diphosphate. Its pathway is nucleotide-sugar biosynthesis; UDP-N-acetyl-alpha-D-glucosamine biosynthesis; N-acetyl-alpha-D-glucosamine 1-phosphate from alpha-D-glucosamine 6-phosphate (route II): step 2/2. The protein operates within nucleotide-sugar biosynthesis; UDP-N-acetyl-alpha-D-glucosamine biosynthesis; UDP-N-acetyl-alpha-D-glucosamine from N-acetyl-alpha-D-glucosamine 1-phosphate: step 1/1. It functions in the pathway bacterial outer membrane biogenesis; LPS lipid A biosynthesis. Functionally, catalyzes the last two sequential reactions in the de novo biosynthetic pathway for UDP-N-acetylglucosamine (UDP-GlcNAc). The C-terminal domain catalyzes the transfer of acetyl group from acetyl coenzyme A to glucosamine-1-phosphate (GlcN-1-P) to produce N-acetylglucosamine-1-phosphate (GlcNAc-1-P), which is converted into UDP-GlcNAc by the transfer of uridine 5-monophosphate (from uridine 5-triphosphate), a reaction catalyzed by the N-terminal domain. This Paracoccus denitrificans (strain Pd 1222) protein is Bifunctional protein GlmU.